The following is a 427-amino-acid chain: Probable anaerobic glycerol-3-phosphate dehydrogenase subunit B (427 aa).

This sequence belongs to the anaerobic G-3-P dehydrogenase subunit B family. FMN serves as cofactor.

It carries out the reaction a quinone + sn-glycerol 3-phosphate = dihydroxyacetone phosphate + a quinol. Its pathway is polyol metabolism; glycerol degradation via glycerol kinase pathway; glycerone phosphate from sn-glycerol 3-phosphate (anaerobic route): step 1/1. The sequence is that of Probable anaerobic glycerol-3-phosphate dehydrogenase subunit B from Halobacterium salinarum (strain ATCC 29341 / DSM 671 / R1).